Consider the following 98-residue polypeptide: Protein translation factor SUI1 homolog (98 aa).

It belongs to the SUI1 family.

The protein is Protein translation factor SUI1 homolog of Thermococcus onnurineus (strain NA1).